A 615-amino-acid chain; its full sequence is Delta(14)-sterol reductase LBR (615 aa).

The Tudor domain maps to 1–62 (MPSRKFADGE…DIKPLTSFRQ (62 aa)). Topologically, residues 1-211 (MPSRKFADGE…IRAKDLEFGG (211 aa)) are nuclear. A disordered region spans residues 53–109 (DIKPLTSFRQRKGGSTSSSPSRRRGSRSRSRSRSPGRPPKSARRSASASHQADIKEA). Lysine 55 is modified (N6-acetyllysine). Threonine 58 bears the Phosphothreonine mark. Residues serine 59 and serine 67 each carry the phosphoserine modification. Phosphoserine; by CDK1 is present on residues serine 71 and serine 86. The segment covering 73–86 (SRRRGSRSRSRSRS) has biased composition (basic residues). Phosphoserine occurs at positions 97 and 99. Threonine 118 bears the Phosphothreonine mark. At serine 128 the chain carries Phosphoserine. Threonine 200 bears the Phosphothreonine mark. Helical transmembrane passes span 212 to 232 (VPGVFLIMFGLPVFLFLLLLM), 258 to 278 (VFGVYLLWFLIQVVFYLLPIG), 299 to 319 (FYAFILTSAVIGTSLFQGVEF), 326 to 346 (FLQFALAATVFCVVLSVYLYM), 415 to 435 (VPSLAMILVNSFQLLYVVDAL), 447 to 467 (IIHDGFGFMLAFGDLVWVPFI), 481 to 501 (EVSWPMASLIIVLKFCGYVIF), and 561 to 581 (ACGFNHILPYFYIIYFTMLLV). N6-acetyllysine is present on residues lysine 594 and lysine 601.

This sequence belongs to the ERG4/ERG24 family. As to quaternary structure, interacts with CBX5. Interacts with DNA. Interaction with DNA is sequence independent with higher affinity for supercoiled and relaxed circular DNA than linear DNA. Interacts with lamin B. Interacts with CLNK. Interacts with TMEM147; promoting LBR localization to the nucleus inner membrane. Post-translationally, phosphorylated by CDK1 in mitosis when the inner nuclear membrane breaks down into vesicles that dissociate from the lamina and the chromatin. It is phosphorylated by different protein kinases in interphase when the membrane is associated with these structures. Phosphorylation of LBR and HP1 proteins may be responsible for some of the alterations in chromatin organization and nuclear structure which occur at various times during the cell cycle. Phosphorylated by SRPK1. In late anaphase LBR is dephosphorylated, probably by PP1 and/or PP2A, allowing reassociation with chromatin.

It localises to the nucleus inner membrane. Its subcellular location is the nucleus. The protein localises to the cytoplasm. The protein resides in the endoplasmic reticulum membrane. It carries out the reaction 5alpha-cholest-8,14-dien-3beta-ol + NADPH + H(+) = 5alpha-cholest-8-en-3beta-ol + NADP(+). The enzyme catalyses 4,4-dimethyl-5alpha-cholesta-8,24-dien-3beta-ol + NADP(+) = 4,4-dimethyl-5alpha-cholesta-8,14,24-trien-3beta-ol + NADPH + H(+). It catalyses the reaction 4,4-dimethyl-8,14-cholestadien-3beta-ol + NADPH + H(+) = 4,4-dimethyl-5alpha-cholest-8-en-3beta-ol + NADP(+). It functions in the pathway steroid biosynthesis; cholesterol biosynthesis. In terms of biological role, catalyzes the reduction of the C14-unsaturated bond of lanosterol, as part of the metabolic pathway leading to cholesterol biosynthesis. Plays a critical role in myeloid cell cholesterol biosynthesis which is essential to both myeloid cell growth and functional maturation. Mediates the activation of NADPH oxidases, perhaps by maintaining critical levels of cholesterol required for membrane lipid raft formation during neutrophil differentiation. Anchors the lamina and the heterochromatin to the inner nuclear membrane. The protein is Delta(14)-sterol reductase LBR (LBR) of Pongo abelii (Sumatran orangutan).